Here is a 224-residue protein sequence, read N- to C-terminus: Glycerol-3-phosphate acyltransferase (224 aa).

6 helical membrane-spanning segments follow: residues 4–24 (FVIV…GSIN), 60–80 (LVIF…VYFV), 88–108 (SVVV…FPIW), 124–144 (IISV…LIII), 149–169 (IVSF…FIPW), and 182–202 (WPWW…IWSH).

This sequence belongs to the PlsY family. In terms of assembly, probably interacts with PlsX.

It localises to the cell membrane. The catalysed reaction is an acyl phosphate + sn-glycerol 3-phosphate = a 1-acyl-sn-glycero-3-phosphate + phosphate. Its pathway is lipid metabolism; phospholipid metabolism. Its function is as follows. Catalyzes the transfer of an acyl group from acyl-phosphate (acyl-PO(4)) to glycerol-3-phosphate (G3P) to form lysophosphatidic acid (LPA). This enzyme utilizes acyl-phosphate as fatty acyl donor, but not acyl-CoA or acyl-ACP. This chain is Glycerol-3-phosphate acyltransferase, found in Mycoplasmopsis pulmonis (strain UAB CTIP) (Mycoplasma pulmonis).